A 196-amino-acid polypeptide reads, in one-letter code: ATP-dependent Clp protease proteolytic subunit (196 aa).

The active-site Nucleophile is the Ser-96. His-121 is an active-site residue.

This sequence belongs to the peptidase S14 family. As to quaternary structure, fourteen ClpP subunits assemble into 2 heptameric rings which stack back to back to give a disk-like structure with a central cavity, resembling the structure of eukaryotic proteasomes.

The protein resides in the cytoplasm. It carries out the reaction Hydrolysis of proteins to small peptides in the presence of ATP and magnesium. alpha-casein is the usual test substrate. In the absence of ATP, only oligopeptides shorter than five residues are hydrolyzed (such as succinyl-Leu-Tyr-|-NHMec, and Leu-Tyr-Leu-|-Tyr-Trp, in which cleavage of the -Tyr-|-Leu- and -Tyr-|-Trp bonds also occurs).. Its function is as follows. Cleaves peptides in various proteins in a process that requires ATP hydrolysis. Has a chymotrypsin-like activity. Plays a major role in the degradation of misfolded proteins. This chain is ATP-dependent Clp protease proteolytic subunit, found in Streptococcus mutans serotype c (strain ATCC 700610 / UA159).